The sequence spans 173 residues: ATP synthase subunit b (173 aa).

Residues 12-34 (AFGNLYAIGWSAVNFLVLLALMY) form a helical membrane-spanning segment.

Belongs to the ATPase B chain family. F-type ATPases have 2 components, F(1) - the catalytic core - and F(0) - the membrane proton channel. F(1) has five subunits: alpha(3), beta(3), gamma(1), delta(1), epsilon(1). F(0) has three main subunits: a(1), b(2) and c(10-14). The alpha and beta chains form an alternating ring which encloses part of the gamma chain. F(1) is attached to F(0) by a central stalk formed by the gamma and epsilon chains, while a peripheral stalk is formed by the delta and b chains.

It localises to the cell membrane. F(1)F(0) ATP synthase produces ATP from ADP in the presence of a proton or sodium gradient. F-type ATPases consist of two structural domains, F(1) containing the extramembraneous catalytic core and F(0) containing the membrane proton channel, linked together by a central stalk and a peripheral stalk. During catalysis, ATP synthesis in the catalytic domain of F(1) is coupled via a rotary mechanism of the central stalk subunits to proton translocation. Functionally, component of the F(0) channel, it forms part of the peripheral stalk, linking F(1) to F(0). This is ATP synthase subunit b from Syntrophomonas wolfei subsp. wolfei (strain DSM 2245B / Goettingen).